The chain runs to 412 residues: [Pyruvate dehydrogenase (acetyl-transferring)] kinase isozyme 4, mitochondrial (412 aa).

Positions 138–368 constitute a Histidine kinase domain; that stretch reads ILEYKDNCTV…DAIIYLKALS (231 aa). ATP-binding positions include 254–261, Asp-293, 312–313, and 329–334; these read ELFKNAMR, ST, and GFGYGL.

Belongs to the PDK/BCKDK protein kinase family. Homodimer. Interacts with the pyruvate dehydrogenase complex subunit DLAT, and is part of the multimeric pyruvate dehydrogenase complex that contains multiple copies of pyruvate dehydrogenase (E1), dihydrolipoamide acetyltransferase (DLAT, E2) and lipoamide dehydrogenase (DLD, E3). In terms of tissue distribution, ubiquitous; highest levels of expression in heart and skeletal muscle.

Its subcellular location is the mitochondrion matrix. It catalyses the reaction L-seryl-[pyruvate dehydrogenase E1 alpha subunit] + ATP = O-phospho-L-seryl-[pyruvate dehydrogenase E1 alpha subunit] + ADP + H(+). Kinase that plays a key role in regulation of glucose and fatty acid metabolism and homeostasis via phosphorylation of the pyruvate dehydrogenase subunits PDHA1 and PDHA2. This inhibits pyruvate dehydrogenase activity, and thereby regulates metabolite flux through the tricarboxylic acid cycle, down-regulates aerobic respiration and inhibits the formation of acetyl-coenzyme A from pyruvate. Inhibition of pyruvate dehydrogenase decreases glucose utilization and increases fat metabolism in response to prolonged fasting and starvation. Plays an important role in maintaining normal blood glucose levels under starvation, and is involved in the insulin signaling cascade. Via its regulation of pyruvate dehydrogenase activity, plays an important role in maintaining normal blood pH and in preventing the accumulation of ketone bodies under starvation. In the fed state, mediates cellular responses to glucose levels and to a high-fat diet. Regulates both fatty acid oxidation and de novo fatty acid biosynthesis. Plays a role in the generation of reactive oxygen species. Protects detached epithelial cells against anoikis. Plays a role in cell proliferation via its role in regulating carbohydrate and fatty acid metabolism. The chain is [Pyruvate dehydrogenase (acetyl-transferring)] kinase isozyme 4, mitochondrial (Pdk4) from Rattus norvegicus (Rat).